Reading from the N-terminus, the 221-residue chain is Probable molybdenum cofactor guanylyltransferase (221 aa).

GTP contacts are provided by residues 17-19 (LAG), lysine 29, aspartate 74, and aspartate 103. Aspartate 103 contributes to the Mg(2+) binding site.

The protein belongs to the MobA family. The cofactor is Mg(2+).

The protein localises to the cytoplasm. The enzyme catalyses Mo-molybdopterin + GTP + H(+) = Mo-molybdopterin guanine dinucleotide + diphosphate. Functionally, transfers a GMP moiety from GTP to Mo-molybdopterin (Mo-MPT) cofactor (Moco or molybdenum cofactor) to form Mo-molybdopterin guanine dinucleotide (Mo-MGD) cofactor. The chain is Probable molybdenum cofactor guanylyltransferase from Peptoclostridium acidaminophilum (Eubacterium acidaminophilum).